A 597-amino-acid polypeptide reads, in one-letter code: MIAKQKIKILIGVIIVIATYHFIVSSNVRSKDLSDLVDLGSSDKSTTENERPKNNIVTNNRLDNPPNEDIPHAEPDSPPQEPPKSGNKPDFSIFFEGLEKFAIKQPGIKDKYTSEKAKEKFSTDDNFLFGKEYLENVLDIPQATFKELKDSHKRYVDEHIPKMLQRVKTFGSLAPSDKEWESYKGSSGYIIVGGGRFTWLSFLVIKQLRATGAKLPVEMFIATESDYEKEFCEKVLPKYNARCNVFDYKLADDLKKRFDIGGYQYKMLALLSSKFENVLYLDSDNFPTRNVDYLFESDLYKENNLLLWPDAWARTTNPKYYEIAGVPVKENKLRYSKYDEKQAGGKDKLKPLSEYTFKDSWYHDFEGTLPDPTSETGMFMVNKSSHLKTLLLCLYYNVFGPQYYYPLLTQGSAGEGDKETFIAAAHVMKEPWYQCARQFKWTGYVSKVDNKFTSKALAHYDPVQAQDTTRQDVDIIFMHLSYPKFYPNWLADNHDLVYADTDEHIRMYSSINKNVGYDFDLRVMQFFTEGLCPNYYDSKTGKPIENIPHIDYTNDYMGNHLMYVKDEEQNNIDRCNKVFIPHLKWLKETAEIPTVVS.

The Cytoplasmic portion of the chain corresponds to 1–6 (MIAKQK). The helical transmembrane segment at 7-27 (IKILIGVIIVIATYHFIVSSN) threads the bilayer. At 28–597 (VRSKDLSDLV…ETAEIPTVVS (570 aa)) the chain is on the extracellular side. Residues 39-89 (LGSSDKSTTENERPKNNIVTNNRLDNPPNEDIPHAEPDSPPQEPPKSGNKP) are disordered. A glycan (N-linked (GlcNAc...) asparagine) is linked at Asn-382.

Belongs to the MNN1/MNT family. Mn(2+) is required as a cofactor.

It localises to the golgi apparatus membrane. It functions in the pathway protein modification; protein glycosylation. Its activity is regulated as follows. Enzyme activity is regulated by iron. Alpha-1,2-mannosyltransferase required for cell wall integrity. Responsible for addition of the first alpha-1,2-linked mannose to form the branches on the mannan backbone of oligosaccharides. Addition of alpha-1,2-mannose is required for stabilization of the alpha-1,6-mannose backbone and hence regulates mannan fibril length; and is important for both immune recognition and virulence. Promotes iron uptake and usage along the endocytosis pathway under iron-limiting conditions. This is Alpha-1,2-mannosyltransferase MNN2 (MNN2) from Candida albicans (strain SC5314 / ATCC MYA-2876) (Yeast).